Consider the following 110-residue polypeptide: Thioredoxin (110 aa).

The region spanning 3–108 (KPIEVHDSDF…YREIFDKVLA (106 aa)) is the Thioredoxin domain. An intrachain disulfide couples Cys-32 to Cys-35. The residue at position 105 (Lys-105) is an N6,N6-dimethyllysine; alternate. Lys-105 is modified (N6-methyllysine; alternate).

In terms of biological role, participates in various redox reactions through the reversible oxidation of its active center dithiol to a disulfide and catalyzes dithiol-disulfide exchange reactions. In Chloroflexus aurantiacus (strain ATCC 29366 / DSM 635 / J-10-fl), this protein is Thioredoxin (trxA).